A 276-amino-acid chain; its full sequence is 4-chlorobenzoyl coenzyme A dehalogenase-1 (276 aa).

66-71 (AGFDLE) serves as a coordination point for substrate. Residue His-93 is the Proton acceptor of the active site. Gly-117 serves as a coordination point for substrate. The Nucleophile role is filled by Asp-148. Residue Arg-261 coordinates substrate.

It belongs to the enoyl-CoA hydratase/isomerase family. As to quaternary structure, homotetramer.

The catalysed reaction is 4-chlorobenzoyl-CoA + H2O = 4-hydroxybenzoyl-CoA + chloride + H(+). It functions in the pathway xenobiotic degradation; 4-chlorobenzoate degradation; 4-hydroxybenzoate from 4-chlorobenzoate: step 2/3. In terms of biological role, dehalogenates 4-chlorobenzoyl-CoA, 4-iodobenzoyl-CoA, 4-bromobenzoyl-CoA and, at a slower rate, 4-fluorobenzoyl-CoA. Does not dehalogenate 2-chlorobenzoyl-CoA or 3-chlorobenzoyl-CoA. The polypeptide is 4-chlorobenzoyl coenzyme A dehalogenase-1 (Arthrobacter sp).